Consider the following 291-residue polypeptide: MDFFSPAKLNLFLKLHGKTSRGFHEMTTQYQVIDFGDTLCLERSNEDTLICNLPELSTPQNLVWKSLQIFRDYTQVNDPVAWRLHKRIPIGAGVGGGSSNAATALYALNEHFQTQLSNDELQELGKKIGMDVPLFFSSGSAIGVGCGEEILPYEDYNCEERYVLYFSDQGVLTKDAFSYVHPEDFSHRKDAIALYERDNDLEKSVFRFRKDLEEKKQMLKRMWSPFHAHVGMSGAGATLFVSYPREMETDPSVAKAIHTTIQDSHGLLVNSLRKQSSGWFLNSDNLFTAAR.

Lys-8 is a catalytic residue. 89–99 (PIGAGVGGGSS) lines the ATP pocket. Residue Asp-131 is part of the active site.

The protein belongs to the GHMP kinase family. IspE subfamily.

It carries out the reaction 4-CDP-2-C-methyl-D-erythritol + ATP = 4-CDP-2-C-methyl-D-erythritol 2-phosphate + ADP + H(+). The protein operates within isoprenoid biosynthesis; isopentenyl diphosphate biosynthesis via DXP pathway; isopentenyl diphosphate from 1-deoxy-D-xylulose 5-phosphate: step 3/6. Functionally, catalyzes the phosphorylation of the position 2 hydroxy group of 4-diphosphocytidyl-2C-methyl-D-erythritol. The protein is 4-diphosphocytidyl-2-C-methyl-D-erythritol kinase of Chlamydia caviae (strain ATCC VR-813 / DSM 19441 / 03DC25 / GPIC) (Chlamydophila caviae).